The chain runs to 200 residues: Histone H1 (200 aa).

The segment covering 1–14 has biased composition (low complexity); it reads MPPKKAPTTAKKAA. 2 disordered regions span residues 1–20 and 78–200; these read MPPK…PTHT and DFIQ…NKKA. The 76-residue stretch at 18-93 folds into the H15 domain; sequence THTSYRDMIK…GTSGPVKLAK (76 aa). A compositionally biased stretch (low complexity) spans 94-116; that stretch reads KQAPAKPAPKKPATTTKTAAPKK. A compositionally biased stretch (basic and acidic residues) spans 120 to 131; sequence KKADKAEKAEKP. The segment covering 159–185 has biased composition (low complexity); that stretch reads TAAPAVVDKPKVVSVTKSGRKTTTTAK.

It belongs to the histone H1/H5 family.

The protein resides in the nucleus. It is found in the chromosome. In terms of biological role, could act as an H1-type linker histone. The sequence is that of Histone H1 (hhoA) from Emericella nidulans (strain FGSC A4 / ATCC 38163 / CBS 112.46 / NRRL 194 / M139) (Aspergillus nidulans).